The following is a 143-amino-acid chain: uncharacterized protein (143 aa).

A signal peptide spans 1 to 32; it reads MITNLRRRTAMAAAGLGAALGLGILLVPTVDA.

The protein to M.tuberculosis Rv1269c.

This is an uncharacterized protein from Mycobacterium tuberculosis (strain CDC 1551 / Oshkosh).